A 130-amino-acid chain; its full sequence is Small ribosomal subunit protein uS9 (130 aa).

Residues 105–130 (TRDPRMKERKKYGLKKARRAPQFSKR) are disordered. Residues 111 to 130 (KERKKYGLKKARRAPQFSKR) are compositionally biased toward basic residues.

The protein belongs to the universal ribosomal protein uS9 family.

This chain is Small ribosomal subunit protein uS9, found in Acetivibrio thermocellus (strain ATCC 27405 / DSM 1237 / JCM 9322 / NBRC 103400 / NCIMB 10682 / NRRL B-4536 / VPI 7372) (Clostridium thermocellum).